A 461-amino-acid polypeptide reads, in one-letter code: Serine--tRNA ligase (461 aa).

The tract at residues Glu112–Phe134 is disordered. Positions Pro114–Phe134 are enriched in basic and acidic residues. Thr252–Glu254 is a binding site for L-serine. Arg283–Glu285 provides a ligand contact to ATP. Residue Glu306 participates in L-serine binding. An ATP-binding site is contributed by Glu370–Ser373. An L-serine-binding site is contributed by Ser406.

Belongs to the class-II aminoacyl-tRNA synthetase family. Type-1 seryl-tRNA synthetase subfamily. Homodimer. The tRNA molecule binds across the dimer.

The protein resides in the cytoplasm. It carries out the reaction tRNA(Ser) + L-serine + ATP = L-seryl-tRNA(Ser) + AMP + diphosphate + H(+). The enzyme catalyses tRNA(Sec) + L-serine + ATP = L-seryl-tRNA(Sec) + AMP + diphosphate + H(+). It functions in the pathway aminoacyl-tRNA biosynthesis; selenocysteinyl-tRNA(Sec) biosynthesis; L-seryl-tRNA(Sec) from L-serine and tRNA(Sec): step 1/1. Functionally, catalyzes the attachment of serine to tRNA(Ser). Is also able to aminoacylate tRNA(Sec) with serine, to form the misacylated tRNA L-seryl-tRNA(Sec), which will be further converted into selenocysteinyl-tRNA(Sec). This chain is Serine--tRNA ligase, found in Methylocella silvestris (strain DSM 15510 / CIP 108128 / LMG 27833 / NCIMB 13906 / BL2).